We begin with the raw amino-acid sequence, 299 residues long: Secreted LysM effector ldpB (299 aa).

An N-terminal signal peptide occupies residues 1–19; it reads MGLTSILIAQVLFLGAANS. LysM domains lie at 46–91, 135–182, and 211–258; these read WVND…SYCV, AFYK…YVCI, and KYHK…YVCV. A glycan (N-linked (GlcNAc...) asparagine) is linked at N154. Residues 266–283 are compositionally biased toward low complexity; that stretch reads ATATPQPTPQPQQSSSPD. The segment at 266–288 is disordered; sequence ATATPQPTPQPQQSSSPDQPMPQ.

This sequence belongs to the secreted LysM effector family.

It localises to the secreted. It is found in the cell wall. Its subcellular location is the extracellular space. The protein resides in the extracellular matrix. Its function is as follows. Cell wall chitin of A.fumigatus recruits lung eosinophils during infection and ldpB might have a role in sequestration of chitin and act as triggers of host immunity to dampen host defense. In Aspergillus fumigatus (strain ATCC MYA-4609 / CBS 101355 / FGSC A1100 / Af293) (Neosartorya fumigata), this protein is Secreted LysM effector ldpB.